We begin with the raw amino-acid sequence, 340 residues long: Short-chain dehydrogenase/reductase prx1 (340 aa).

Residues isoleucine 60, lysine 84, aspartate 104, asparagine 131, and lysine 162 each coordinate NADP(+). Serine 184 (proton donor) is an active-site residue. NADP(+)-binding residues include tyrosine 210 and lysine 214. Tyrosine 210 functions as the Proton acceptor in the catalytic mechanism. Lysine 214 serves as the catalytic Lowers pKa of active site Tyr.

Belongs to the short-chain dehydrogenases/reductases (SDR) family.

It functions in the pathway sesquiterpene biosynthesis. Short-chain dehydrogenase/reductase; part of the gene cluster that mediates the biosynthesis of PR-toxin, a bicyclic sesquiterpene belonging to the eremophilane class and acting as a mycotoxin. The first step of the pathway is catalyzed by the aristolochene synthase which performs the cyclization of trans,trans-farnesyl diphosphate (FPP) to the bicyclic sesquiterpene aristolochene. Following the formation of aristolochene, the non-oxygenated aristolochene is converted to the trioxygenated intermediate eremofortin B, via 7-epi-neopetasone. This conversion appears to involve three enzymes, a hydroxysterol oxidase-like enzyme, the quinone-oxidase prx3 that forms the quinone-type-structure in the bicyclic nucleus of aristolochene with the C8-oxo group and the C-3 hydroxyl group, and the P450 monooxygenase prx9 that introduces the epoxide at the double bond between carbons 1 and 2. No monoxy or dioxy-intermediates have been reported to be released to the broth, so these three early oxidative reactions may be coupled together. Eremofortin B is further oxidized by another P450 monooxygenase, that introduces a second epoxide between carbons 7 and 11 prior to acetylation to eremofortin A by the acetyltransferase prx11. The second epoxidation may be performed by a second P450 monooxygenase. After the acetylation step, eremofortin A is converted to eremofortin C and then to PR-toxin. First the conversion of eremofortin A to eremofortin C proceeds by oxidation of the side chain of the molecule at C-12 and is catalyzed by the short-chain oxidoreductase prx1. The cytochrome P450 monooxygenase prx8 also plays a role in this step. The primary alcohol formed at C-12 is finally oxidized by the short-chain alcohol dehydrogenase prx4 that forms PR-toxin. The protein is Short-chain dehydrogenase/reductase prx1 of Penicillium rubens (strain ATCC 28089 / DSM 1075 / NRRL 1951 / Wisconsin 54-1255) (Penicillium chrysogenum).